Consider the following 272-residue polypeptide: TIP41-like protein (272 aa).

K106 is subject to N6-acetyllysine. The tract at residues 173–272 is interaction with PPP2CA; it reads RVMPSSFFLL…ADSQKSTQVE (100 aa). S265 carries the post-translational modification Phosphoserine.

Belongs to the TIP41 family. As to quaternary structure, isoform 1 interacts with PPP2CA. Isoform 2 does not interact with PPP2CA. Interacts with PPP2CB, PPP4C and PPP6C. Interacts with IGBP1; the interaction is dependent on PPP2CA. Associates with a protein phosphatase 2A PP2A(C):IGBP1 complex. Interacts with PPP4C and PPP4R2.

Its subcellular location is the cytoplasm. In terms of biological role, may be a allosteric regulator of serine/threonine-protein phosphatase 2A (PP2A). Isoform 1 inhibits catalytic activity of the PP2A(D) core complex in vitro. The PP2A(C):TIPRL complex does not show phosphatase activity. Acts as a negative regulator of serine/threonine-protein phosphatase 4 probably by inhibiting the formation of the active PPP4C:PPP4R2 complex; the function is proposed to implicate it in DNA damage response by promoting H2AX phosphorylated on Ser-140 (gamma-H2AX). May play a role in the regulation of ATM/ATR signaling pathway controlling DNA replication and repair. The protein is TIP41-like protein (TIPRL) of Homo sapiens (Human).